A 369-amino-acid polypeptide reads, in one-letter code: Anhydro-N-acetylmuramic acid kinase (369 aa).

12–19 (GTSMDGID) lines the ATP pocket.

It belongs to the anhydro-N-acetylmuramic acid kinase family.

The catalysed reaction is 1,6-anhydro-N-acetyl-beta-muramate + ATP + H2O = N-acetyl-D-muramate 6-phosphate + ADP + H(+). Its pathway is amino-sugar metabolism; 1,6-anhydro-N-acetylmuramate degradation. It functions in the pathway cell wall biogenesis; peptidoglycan recycling. Its function is as follows. Catalyzes the specific phosphorylation of 1,6-anhydro-N-acetylmuramic acid (anhMurNAc) with the simultaneous cleavage of the 1,6-anhydro ring, generating MurNAc-6-P. Is required for the utilization of anhMurNAc either imported from the medium or derived from its own cell wall murein, and thus plays a role in cell wall recycling. In Shewanella sediminis (strain HAW-EB3), this protein is Anhydro-N-acetylmuramic acid kinase.